The sequence spans 138 residues: MPESAPSTPPSVNRRHEPEMLSEYPSLMFEHSYLASPSSPIDQVHDELKHSQKRPRLTNDEETIPEEDDSTVRLTDSELEDPVSSNELIQTSCHLLTSVLTQLQTNLDKLKDSHQKALLRIQELEKKVSELSKNNKDS.

2 disordered regions span residues 1-23 (MPESAPSTPPSVNRRHEPEMLSE) and 35-83 (ASPS…EDPV). Residues 60–69 (DEETIPEEDD) show a composition bias toward acidic residues.

This is an uncharacterized protein from Schizosaccharomyces pombe (strain 972 / ATCC 24843) (Fission yeast).